Reading from the N-terminus, the 992-residue chain is Leucine-rich repeat receptor-like serine/threonine-protein kinase BAM3 (992 aa).

A signal peptide spans 1–21; the sequence is MADKIFTFFLILSSISPLLCS. At 22 to 656 the chain is on the extracellular side; the sequence is SLISPLNLSL…ARSRGEISAK (635 aa). N-linked (GlcNAc...) asparagine glycosylation occurs at Asn28. Cys64 and Cys71 are joined by a disulfide. Asn75 and Asn87 each carry an N-linked (GlcNAc...) asparagine glycan. 6 LRR repeats span residues 75-99, 100-124, 126-148, 150-173, 174-199, and 201-221; these read NQSI…ISRL, SPSL…IYEL, GLEV…GFSQ, TQLV…LTTL, TRLE…SFLS, and KFLS…LANI. Residues Asn131 and Asn163 are each glycosylated (N-linked (GlcNAc...) asparagine). A glycan (N-linked (GlcNAc...) asparagine) is linked at Asn220. Residues 226 to 231 carry the CLE45 peptide binding motif; the sequence is QLYLGY. LRR repeat units lie at residues 246-270, 271-294, 296-320, 322-342, 343-366, 368-391, 393-414, 415-438, 439-462, 465-489, 491-513, 514-536, 537-561, 563-585, and 586-610; these read LINL…LGNL, KNLE…LGNM, SLKT…GLQK, QLFN…VSEL, PDLQ…LGSN, NLIE…CFGR, LKIL…LGQC, EPLW…LIYL, PNLS…EAGN, FSSL…IRNL, SLQI…IGSL, KSLL…EFGD, CMSL…ISQI, ILNY…LGYM, and KSLT…QFSY. Asn256 and Asn293 each carry an N-linked (GlcNAc...) asparagine glycan. A glycan (N-linked (GlcNAc...) asparagine) is linked at Asn354. Asn440 and Asn472 each carry an N-linked (GlcNAc...) asparagine glycan. Asn525 carries an N-linked (GlcNAc...) asparagine glycan. Asn568, Asn575, Asn597, Asn613, Asn631, and Asn635 each carry an N-linked (GlcNAc...) asparagine glycan. The helical transmembrane segment at 657 to 677 threads the bilayer; sequence FKLFFGLGLLGFFLVFVVLAV. The Cytoplasmic portion of the chain corresponds to 678 to 992; it reads VKNRRMRKNN…ISQAKQPNTF (315 aa). A Protein kinase domain is found at 710–992; that stretch reads VKENHVIGKG…ISQAKQPNTF (283 aa). ATP is bound by residues 716-724 and Lys738; that span reads IGKGGRGIV. The Proton acceptor role is filled by Asp836.

This sequence belongs to the protein kinase superfamily. Ser/Thr protein kinase family. As to quaternary structure, interacts with CLE45, especially in roots. Binds to the dimer CLV2/CRN. In terms of tissue distribution, expressed in seedlings, roots, leaves, stems, inflorescences, flowers and siliques. In roots, confined to protophloem and sieve element precursor cells.

It is found in the cell membrane. The protein resides in the endoplasmic reticulum membrane. It catalyses the reaction L-seryl-[protein] + ATP = O-phospho-L-seryl-[protein] + ADP + H(+). The catalysed reaction is L-threonyl-[protein] + ATP = O-phospho-L-threonyl-[protein] + ADP + H(+). Necessary for male gametophyte development, as well as ovule specification and function. Required for the development of high-ordered vascular strands within the leaf and a correlated control of leaf shape, size and symmetry. LRR-rich receptor-like kinase (LRR-RLK) involved in the perception of CLE45 peptide ligand which mediates root growth inhibition by repressing protophloem differentiation; this mechanism requires CRN. BRX, BAM3, and CLE45 act together to regulate the transition of protophloem cells from proliferation to differentiation, thus impinging on postembryonic growth capacity of the root meristem. Necessary for CLE45 peptide-triggered accumulation of MAKR5 in developing sieve elements. The chain is Leucine-rich repeat receptor-like serine/threonine-protein kinase BAM3 from Arabidopsis thaliana (Mouse-ear cress).